A 767-amino-acid chain; its full sequence is Transient receptor potential cation channel subfamily V member 6 (767 aa).

The disordered stretch occupies residues 1–33; it reads MGPLQREGRPALGDANVAPGSSPGGVWHQPQPP. Topologically, residues 1–366 are cytoplasmic; it reads MGPLQREGRP…SLKWKRYGRP (366 aa). 3 ANK repeats span residues 84 to 114, 118 to 147, and 156 to 185; these read IWES…EVHQ, MGET…ELVF, and EGQT…SVSA. An interaction with calmodulin region spans residues 133-143; the sequence is EAAMVLMEAAP. Phosphotyrosine; by SRC is present on residues Y201 and Y202. 3 ANK repeats span residues 202–231, 235–276, and 278–307; these read YGEH…DIRA, LGNT…LVPN, and QGLT…HIQW. The helical transmembrane segment at 367-387 threads the bilayer; the sequence is YFCVLGAIYVLYIICFTMCCV. Over 388-424 the chain is Extracellular; that stretch reads YRPLKPRITNRTNPRDNTLLQQKLLQEAYVTPKDDLR. N397 is a glycosylation site (N-linked (GlcNAc...) asparagine). A helical membrane pass occupies residues 425–447; the sequence is LVGELVSIVGAVIILLVEIPDIF. Topologically, residues 448–462 are cytoplasmic; that stretch reads RLGVTRFFGQTILGG. The chain crosses the membrane as a helical span at residues 463-482; that stretch reads PFHVIIVTYAFMVLVTMVMR. Residues 483 to 488 lie on the Extracellular side of the membrane; sequence LTNSDG. A helical membrane pass occupies residues 489-508; it reads EVVPMSFALVLGWCNVMYFA. At 509–528 the chain is on the cytoplasmic side; that stretch reads RGFQMLGPFTIMIQKMIFGD. The chain crosses the membrane as a helical span at residues 529 to 551; the sequence is LMRFCWLMAVVILGFASAFYIIF. Residues 552–564 are Extracellular-facing; the sequence is QTEDPDELGHFYD. Residues 565–584 constitute an intramembrane region (pore-forming); that stretch reads YPMALFSTFELFLTIIDGPA. Positions 580-584 match the Selectivity filter motif; sequence IDGPA. Position 581 (D581) interacts with Ca(2+). Over 585-595 the chain is Extracellular; sequence NYDVDLPFMYS. A helical membrane pass occupies residues 596-616; it reads ITYAAFAIIATLLMLNLLIAM. At 617–767 the chain is on the cytoplasmic side; the sequence is MGDTHWRVAH…EDGEGWEYQI (151 aa). The tract at residues 637 to 641 is interaction with S100A10; it reads VATTV. An interaction with calmodulin region spans residues 689–707; the sequence is AFQQQDDLYSEDLEKDSGE.

This sequence belongs to the transient receptor (TC 1.A.4) family. TrpV subfamily. TRPV6 sub-subfamily. Homotetramer. Probably also forms heterotetramers with TRPV5. Interacts with TRPV5. Interacts with S100A10 and probably with the ANAX2-S100A10 heterotetramer. The interaction with S100A10 is required for the trafficking to the plasma membrane. Interacts with calmodulin. Interacts with BSPRY. Interacts with TCAF1 and TCAF2. In terms of processing, glycosylated. Phosphorylation at Tyr-201 and Tyr-202 by SRC leads to an increased calcium influx through the channel. Probably dephosphorylated at these sites by PTPN1. In terms of tissue distribution, expressed in duodenum, proximal jejunum, cecum, and colon.

Its subcellular location is the cell membrane. It catalyses the reaction Ca(2+)(in) = Ca(2+)(out). Its function is as follows. Calcium selective cation channel that mediates Ca(2+) uptake in various tissues, including the intestine. Important for normal Ca(2+) ion homeostasis in the body, including bone and skin. The channel is activated by low internal calcium level, probably including intracellular calcium store depletion, and the current exhibits an inward rectification. Inactivation includes both a rapid Ca(2+)-dependent and a slower Ca(2+)-calmodulin-dependent mechanism; the latter may be regulated by phosphorylation. In vitro, is slowly inhibited by Mg(2+) in a voltage-independent manner. Heteromeric assembly with TRPV5 seems to modify channel properties. TRPV5-TRPV6 heteromultimeric concatemers exhibit voltage-dependent gating. The protein is Transient receptor potential cation channel subfamily V member 6 (Trpv6) of Rattus norvegicus (Rat).